The sequence spans 199 residues: Recombination protein RecR (199 aa).

The C4-type zinc finger occupies 56–71; sequence CSICFNWSAEDPCEIC. The region spanning 79 to 174 is the Toprim domain; that stretch reads SLWCVVADVK…TLRMTRLAFG (96 aa).

Belongs to the RecR family.

Its function is as follows. May play a role in DNA repair. It seems to be involved in an RecBC-independent recombinational process of DNA repair. It may act with RecF and RecO. This is Recombination protein RecR from Synechococcus sp. (strain JA-2-3B'a(2-13)) (Cyanobacteria bacterium Yellowstone B-Prime).